The sequence spans 235 residues: Large ribosomal subunit protein uL1 (235 aa).

This sequence belongs to the universal ribosomal protein uL1 family. Part of the 50S ribosomal subunit.

Functionally, binds directly to 23S rRNA. The L1 stalk is quite mobile in the ribosome, and is involved in E site tRNA release. Its function is as follows. Protein L1 is also a translational repressor protein, it controls the translation of the L11 operon by binding to its mRNA. In Prochlorococcus marinus (strain AS9601), this protein is Large ribosomal subunit protein uL1.